The following is a 308-amino-acid chain: Phenylcoumaran benzylic ether reductase Betv6 (308 aa).

NADP(+)-binding positions include 11–17, Arg36, and Lys45; that span reads GGTGYIG. The active-site Proton acceptor is the Lys133. An NADP(+)-binding site is contributed by Arg137.

It belongs to the NmrA-type oxidoreductase family. Isoflavone reductase subfamily.

The catalysed reaction is (-)-dehydrodiconiferyl alcohol + NADPH + H(+) = (S)-isodihydrodehydrodiconiferyl alcohol + NADP(+). It carries out the reaction (+)-dehydrodiconiferyl alcohol + NADPH + H(+) = (R)-isodihydrodehydrodiconiferyl alcohol + NADP(+). Its function is as follows. Oxidoreductase involved in lignan biosynthesis. Catalyzes the NADPH-dependent reduction of phenylcoumaran benzylic ethers. Converts dehydrodiconiferyl alcohol (DDC) to isodihydrodehydrodiconiferyl alcohol (IDDDC). In Betula pendula (European white birch), this protein is Phenylcoumaran benzylic ether reductase Betv6.